Consider the following 440-residue polypeptide: Mitochondrial translation factor 2 (440 aa).

The transit peptide at 1–15 (MIRTSSILKNCNYRY) directs the protein to the mitochondrion.

The protein resides in the mitochondrion matrix. Its function is as follows. Required for the processing and/or for the stability of the CYTB and COX1 intron-containing pre-mRNAs and of the ATP6 transcript. Could be a stem-loop RNA-binding protein that plays a role in determining RNA stability. In Saccharomyces cerevisiae (strain ATCC 204508 / S288c) (Baker's yeast), this protein is Mitochondrial translation factor 2 (MTF2).